A 145-amino-acid polypeptide reads, in one-letter code: uncharacterized protein (145 aa).

Ser67 carries the post-translational modification Phosphoserine.

Expressed in retina and retinoblastoma.

This is an uncharacterized protein from Homo sapiens (Human).